A 507-amino-acid chain; its full sequence is RNA-splicing ligase RtcB homolog (507 aa).

Asp121, Cys124, His229, His261, and His355 together coordinate Mn(2+). Residue 228–232 (NHYAE) coordinates GMP. GMP is bound by residues 355–356 (HN), 404–407 (GGTM), Ser411, 430–433 (HGAG), and Lys506. His430 (GMP-histidine intermediate) is an active-site residue.

The protein belongs to the RtcB family. In terms of assembly, catalytic component of the tRNA-splicing ligase complex. The cofactor is Mn(2+).

It catalyses the reaction a 3'-end 3'-phospho-ribonucleotide-RNA + a 5'-end dephospho-ribonucleoside-RNA + GTP = a ribonucleotidyl-ribonucleotide-RNA + GMP + diphosphate. The enzyme catalyses a 3'-end 2',3'-cyclophospho-ribonucleotide-RNA + a 5'-end dephospho-ribonucleoside-RNA + GTP + H2O = a ribonucleotidyl-ribonucleotide-RNA + GMP + diphosphate + H(+). Functionally, catalytic subunit of the tRNA-splicing ligase complex that acts by directly joining spliced tRNA halves to mature-sized tRNAs by incorporating the precursor-derived splice junction phosphate into the mature tRNA as a canonical 3',5'-phosphodiester. May act as an RNA ligase with broad substrate specificity, and may function toward other RNAs. This is RNA-splicing ligase RtcB homolog from Branchiostoma floridae (Florida lancelet).